Consider the following 425-residue polypeptide: Serine--tRNA ligase (425 aa).

Residue T232–E234 coordinates L-serine. ATP contacts are provided by residues R263–E265 and V279. E286 lines the L-serine pocket. Residue E350–S353 participates in ATP binding. Residue T387 participates in L-serine binding.

The protein belongs to the class-II aminoacyl-tRNA synthetase family. Type-1 seryl-tRNA synthetase subfamily. Homodimer. The tRNA molecule binds across the dimer.

The protein localises to the cytoplasm. The enzyme catalyses tRNA(Ser) + L-serine + ATP = L-seryl-tRNA(Ser) + AMP + diphosphate + H(+). The catalysed reaction is tRNA(Sec) + L-serine + ATP = L-seryl-tRNA(Sec) + AMP + diphosphate + H(+). Its pathway is aminoacyl-tRNA biosynthesis; selenocysteinyl-tRNA(Sec) biosynthesis; L-seryl-tRNA(Sec) from L-serine and tRNA(Sec): step 1/1. Functionally, catalyzes the attachment of serine to tRNA(Ser). Is also able to aminoacylate tRNA(Sec) with serine, to form the misacylated tRNA L-seryl-tRNA(Sec), which will be further converted into selenocysteinyl-tRNA(Sec). The protein is Serine--tRNA ligase of Methanoculleus marisnigri (strain ATCC 35101 / DSM 1498 / JR1).